The primary structure comprises 387 residues: Leucine aminopeptidase 1 (387 aa).

Positions M1–A18 are cleaved as a signal peptide. Residues A19–V87 constitute a propeptide that is removed on maturation. N179 is a glycosylation site (N-linked (GlcNAc...) asparagine). H187, D206, E245, and D272 together coordinate Zn(2+). Cysteines 321 and 325 form a disulfide. Zn(2+) is bound at residue H354.

Belongs to the peptidase M28 family. M28E subfamily. As to quaternary structure, monomer. Zn(2+) is required as a cofactor.

The protein localises to the secreted. In terms of biological role, extracellular aminopeptidase that allows assimilation of proteinaceous substrates. This is Leucine aminopeptidase 1 (lap1) from Aspergillus oryzae (strain ATCC 42149 / RIB 40) (Yellow koji mold).